We begin with the raw amino-acid sequence, 123 residues long: Small ribosomal subunit protein uS12 (123 aa).

Aspartate 89 is subject to 3-methylthioaspartic acid. The interval 100-123 (GSLDTSGVKGRNQGRSKYGTKRPK) is disordered. Basic residues predominate over residues 111 to 123 (NQGRSKYGTKRPK).

It belongs to the universal ribosomal protein uS12 family. As to quaternary structure, part of the 30S ribosomal subunit. Contacts proteins S8 and S17. May interact with IF1 in the 30S initiation complex.

Functionally, with S4 and S5 plays an important role in translational accuracy. Interacts with and stabilizes bases of the 16S rRNA that are involved in tRNA selection in the A site and with the mRNA backbone. Located at the interface of the 30S and 50S subunits, it traverses the body of the 30S subunit contacting proteins on the other side and probably holding the rRNA structure together. The combined cluster of proteins S8, S12 and S17 appears to hold together the shoulder and platform of the 30S subunit. In Pseudomonas fluorescens (strain ATCC BAA-477 / NRRL B-23932 / Pf-5), this protein is Small ribosomal subunit protein uS12.